The sequence spans 364 residues: Probable transcription factor At4g00390 (364 aa).

The disordered stretch occupies residues 1-149 (MTKKLDPPTA…STKRVKKDEE (149 aa)). Residues 13 to 32 (SDEDDVETSEDDSSSSEEDE) are compositionally biased toward acidic residues. The segment covering 39-80 (ATTAAAPAKSTAVSAATPAKSTSVSAAAPSKSTAVSAAADSD) has biased composition (low complexity). Residues 81–93 (SGSESETDSDSES) are compositionally biased toward acidic residues.

Belongs to the GeBP family.

The chain is Probable transcription factor At4g00390 from Arabidopsis thaliana (Mouse-ear cress).